We begin with the raw amino-acid sequence, 331 residues long: Centriolar satellite-associated tubulin polyglutamylase complex regulator 1 (331 aa).

The interval 283–331 is disordered; sequence PTSNNNSSSSALGQKEMSKKASPRKSLHQRKRIEMESDGSTEETDSSEN. A compositionally biased stretch (basic residues) spans 303 to 313; it reads ASPRKSLHQRK. Positions 318-331 are enriched in acidic residues; the sequence is ESDGSTEETDSSEN.

This sequence belongs to the CSTPP1 family. As to quaternary structure, interacts with PCM1. Interacts with the complex TPGC. Binds to alpha-tubulin. In terms of tissue distribution, expression in elevated in ciliated tissues/organs, including brain, spinal cord, kidney, eyes, ears and lateral line.

It is found in the cytoplasm. The protein resides in the cytoskeleton. The protein localises to the microtubule organizing center. Its subcellular location is the centrosome. It localises to the centriolar satellite. Regulator of the tubulin polyglutamylase complex (TPGC) that controls cytoskeletal organization, nuclear shape, and cilium disassembly by balancing microtubule and actin assembly. Regulates the assembly and stability of the TPGC and thereby modulates polyglutamylation of the microtubule, which antagonizes MAP4 binding. The polypeptide is Centriolar satellite-associated tubulin polyglutamylase complex regulator 1 (cstpp1) (Danio rerio (Zebrafish)).